Reading from the N-terminus, the 328-residue chain is Pyruvate dehydrogenase E1 component subunit beta (328 aa).

Thiamine diphosphate is bound at residue E60. K(+) contacts are provided by I113, I162, and N166.

As to quaternary structure, heterodimer of an alpha and a beta chain. It depends on thiamine diphosphate as a cofactor.

The protein resides in the plastid. It localises to the chloroplast. It catalyses the reaction N(6)-[(R)-lipoyl]-L-lysyl-[protein] + pyruvate + H(+) = N(6)-[(R)-S(8)-acetyldihydrolipoyl]-L-lysyl-[protein] + CO2. Its function is as follows. The pyruvate dehydrogenase complex catalyzes the overall conversion of pyruvate to acetyl-CoA and CO(2). It contains multiple copies of three enzymatic components: pyruvate dehydrogenase (E1), dihydrolipoamide acetyltransferase (E2) and lipoamide dehydrogenase (E3). The protein is Pyruvate dehydrogenase E1 component subunit beta (pdhB) of Staurastrum punctulatum (Green alga).